Consider the following 716-residue polypeptide: Forkhead box protein P2 (716 aa).

Residues 1-28 (MMQESATETISNSSMNQNGMSTLSSQLD) show a composition bias toward polar residues. Disordered regions lie at residues 1 to 45 (MMQE…SEVS) and 286 to 340 (KHGG…TGAS). The span at 293–306 (TTNNSSSTTSSTTS) shows a compositional bias: low complexity. Residues 316-325 (SIVNGQSSVL) are compositionally biased toward polar residues. A compositionally biased stretch (basic and acidic residues) spans 327-338 (ARRDSSSHEETG). The segment at 347 to 372 (GVCKWPGCESICEDFGQFLKHLNNEH) adopts a C2H2-type zinc-finger fold. The segment at 389-410 (VQQLEIQLSKERERLQAMMTHL) is leucine-zipper. The segment at 423-427 (PLNLV) is CTBP1-binding. Residues 439 to 460 (TSPQSLPQTPTTPTAPVTPITQ) show a composition bias toward low complexity. A disordered region spans residues 439–466 (TSPQSLPQTPTTPTAPVTPITQGPSVIT). The fork-head DNA-binding region spans 505–595 (RPPFTYATLI…SQKITGSPTL (91 aa)). Disordered regions lie at residues 650–669 (LDHI…QPHI) and 679–716 (VIAE…EDLE). Residues 700-716 (LEDDREIEEEPLSEDLE) are compositionally biased toward acidic residues.

As to quaternary structure, forms homodimers and heterodimers with FOXP1 and FOXP4. Dimerization is required for DNA-binding. Interacts with CTBP1. Interacts with FOXP1. Interacts with TBR1. Interacts with ZMYM2.

Its subcellular location is the nucleus. Transcriptional repressor that may play a role in the specification and differentiation of lung epithelium. May also play a role in developing neural, gastrointestinal and cardiovascular tissues. Can act with CTBP1 to synergistically repress transcription but CTPBP1 is not essential. Plays a role in synapse formation by regulating SRPX2 levels. This is Forkhead box protein P2 (FOXP2) from Pan paniscus (Pygmy chimpanzee).